Here is a 514-residue protein sequence, read N- to C-terminus: ATP synthase subunit alpha (514 aa).

Residue 170–177 participates in ATP binding; that stretch reads GDRQTGKT.

This sequence belongs to the ATPase alpha/beta chains family. As to quaternary structure, F-type ATPases have 2 components, CF(1) - the catalytic core - and CF(0) - the membrane proton channel. CF(1) has five subunits: alpha(3), beta(3), gamma(1), delta(1), epsilon(1). CF(0) has three main subunits: a(1), b(2) and c(9-12). The alpha and beta chains form an alternating ring which encloses part of the gamma chain. CF(1) is attached to CF(0) by a central stalk formed by the gamma and epsilon chains, while a peripheral stalk is formed by the delta and b chains.

It is found in the cell inner membrane. The catalysed reaction is ATP + H2O + 4 H(+)(in) = ADP + phosphate + 5 H(+)(out). Produces ATP from ADP in the presence of a proton gradient across the membrane. The alpha chain is a regulatory subunit. The polypeptide is ATP synthase subunit alpha (Acidithiobacillus ferrooxidans (strain ATCC 23270 / DSM 14882 / CIP 104768 / NCIMB 8455) (Ferrobacillus ferrooxidans (strain ATCC 23270))).